A 562-amino-acid chain; its full sequence is uncharacterized protein (562 aa).

5 helical membrane passes run 10–27 (IYPE…YWVG), 34–53 (FSLG…GQFD), 63–85 (IFFL…QGIA), 92–114 (ALFA…KIAG), and 155–177 (FSVI…AIVL). 2 consecutive RCK C-terminal domains span residues 204 to 288 (TENA…HPDS) and 290 to 377 (DETQ…QLGV). The next 6 helical transmembrane spans lie at 387–404 (VAFW…GSLV), 408–430 (GNLP…FSWV), 443–465 (PTVW…ISAG), 475–497 (LGFS…AALV), 504–526 (FHPA…LGMI), and 539–561 (YTIT…ILIL).

This sequence belongs to the AAE transporter (TC 2.A.81) family.

It is found in the cell membrane. This is an uncharacterized protein from Shewanella oneidensis (strain ATCC 700550 / JCM 31522 / CIP 106686 / LMG 19005 / NCIMB 14063 / MR-1).